Reading from the N-terminus, the 462-residue chain is Glycoprotein endo-alpha-1,2-mannosidase (462 aa).

The Cytoplasmic portion of the chain corresponds to 1–8; it reads MAKFRRRT. A helical; Signal-anchor for type II membrane protein membrane pass occupies residues 9-29; sequence CIILALFILFIFSLMMGLKML. Residues 30–462 lie on the Lumenal side of the membrane; that stretch reads RPNTATFGAP…YALDRQLPVS (433 aa). Residues 60 to 462 form a catalytic region; the sequence is DFQKSDRINS…YALDRQLPVS (403 aa).

It belongs to the glycosyl hydrolase 99 family. Undergoes proteolytic cleavage in the C-terminal region. Highly expressed in the liver and kidney. Expressed at lower levels in muscle, pancreas, heart, placenta, lung and brain.

It is found in the golgi apparatus membrane. It catalyses the reaction N-{alpha-Glc-(1-&gt;3)-alpha-Man-(1-&gt;2)-alpha-Man-(1-&gt;2)-alpha-Man-(1-&gt;3)-[alpha-Man-(1-&gt;2)-alpha-Man-(1-&gt;3)-[alpha-Man-(1-&gt;2)-alpha-Man-(1-&gt;6)]-alpha-Man-(1-&gt;6)]-beta-Man-(1-&gt;4)-beta-GlcNAc-(1-&gt;4)-beta-GlcNAc}-L-asparaginyl-[protein] + H2O = alpha-D-glucosyl-(1-&gt;3)-D-mannopyranose + N(4)-{alpha-D-Man-(1-&gt;2)-alpha-D-Man-(1-&gt;3)-[alpha-D-Man-(1-&gt;2)-alpha-D-Man-(1-&gt;3)-[alpha-D-Man-(1-&gt;2)-alpha-D-Man-(1-&gt;6)]-alpha-D-Man-(1-&gt;6)]-beta-D-Man-(1-&gt;4)-beta-D-GlaNAc-(1-&gt;4)-beta-D-GlcNAc}-L-asparaginyl-[protein] (N-glucan mannose isomer 8A1,2,3B1,2). The sequence is that of Glycoprotein endo-alpha-1,2-mannosidase (MANEA) from Homo sapiens (Human).